Consider the following 401-residue polypeptide: Argininosuccinate synthase (401 aa).

ATP is bound by residues 10–18 and A38; that span reads AYSGGVDTS. Y89 contributes to the L-citrulline binding site. G119 contributes to the ATP binding site. L-aspartate-binding residues include T121, N125, and D126. Residue N125 participates in L-citrulline binding. L-citrulline contacts are provided by R129, S177, S186, E262, and Y274.

Belongs to the argininosuccinate synthase family. Type 1 subfamily. In terms of assembly, homotetramer.

Its subcellular location is the cytoplasm. The catalysed reaction is L-citrulline + L-aspartate + ATP = 2-(N(omega)-L-arginino)succinate + AMP + diphosphate + H(+). The protein operates within amino-acid biosynthesis; L-arginine biosynthesis; L-arginine from L-ornithine and carbamoyl phosphate: step 2/3. This chain is Argininosuccinate synthase, found in Synechococcus sp. (strain WH7803).